The following is a 232-amino-acid chain: Small ribosomal subunit protein uS2 (232 aa).

The protein belongs to the universal ribosomal protein uS2 family.

This is Small ribosomal subunit protein uS2 from Carboxydothermus hydrogenoformans (strain ATCC BAA-161 / DSM 6008 / Z-2901).